We begin with the raw amino-acid sequence, 610 residues long: Elongation factor 4 (610 aa).

The 183-residue stretch at 11 to 193 (EKIRNFSIIA…QIVEKVPAPT (183 aa)) folds into the tr-type G domain. GTP is bound by residues 23-28 (DHGKST) and 140-143 (NKID).

Belongs to the TRAFAC class translation factor GTPase superfamily. Classic translation factor GTPase family. LepA subfamily.

It localises to the cell membrane. It carries out the reaction GTP + H2O = GDP + phosphate + H(+). Functionally, required for accurate and efficient protein synthesis under certain stress conditions. May act as a fidelity factor of the translation reaction, by catalyzing a one-codon backward translocation of tRNAs on improperly translocated ribosomes. Back-translocation proceeds from a post-translocation (POST) complex to a pre-translocation (PRE) complex, thus giving elongation factor G a second chance to translocate the tRNAs correctly. Binds to ribosomes in a GTP-dependent manner. This is Elongation factor 4 from Streptococcus pyogenes serotype M6 (strain ATCC BAA-946 / MGAS10394).